We begin with the raw amino-acid sequence, 498 residues long: ATP synthase subunit beta, chloroplastic (498 aa).

Residue 172 to 179 (GGAGVGKT) participates in ATP binding.

This sequence belongs to the ATPase alpha/beta chains family. F-type ATPases have 2 components, CF(1) - the catalytic core - and CF(0) - the membrane proton channel. CF(1) has five subunits: alpha(3), beta(3), gamma(1), delta(1), epsilon(1). CF(0) has four main subunits: a(1), b(1), b'(1) and c(9-12).

It localises to the plastid. The protein localises to the chloroplast thylakoid membrane. The catalysed reaction is ATP + H2O + 4 H(+)(in) = ADP + phosphate + 5 H(+)(out). Functionally, produces ATP from ADP in the presence of a proton gradient across the membrane. The catalytic sites are hosted primarily by the beta subunits. This is ATP synthase subunit beta, chloroplastic from Nicotiana tomentosiformis (Tobacco).